Here is a 1530-residue protein sequence, read N- to C-terminus: Synaptonemal complex protein 2 (1530 aa).

Residues 439-461 show a composition bias toward basic and acidic residues; sequence EKSKSPKEFAKPSKYIKNSDKGN. Positions 439–480 are disordered; sequence EKSKSPKEFAKPSKYIKNSDKGNRNNSQLEKTTPSKRKMSEA. Phosphoserine is present on residues S457 and S465. A Phosphothreonine modification is found at T471. 4 positions are modified to phosphoserine: S494, S519, S529, and S538. Positions 496-555 are disordered; the sequence is VLFSNTSIPPRRRRIKPPLQMTSSAEKPSVSQTSENRVDNAASLKSRSSEGRHRRDNIDK. A compositionally biased stretch (polar residues) spans 515-530; the sequence is QMTSSAEKPSVSQTSE. Residues 542–555 show a composition bias toward basic and acidic residues; sequence RSSEGRHRRDNIDK. T619 carries the post-translational modification Phosphothreonine. 3 disordered regions span residues 653-676, 693-717, and 755-795; these read QKSS…KKEQ, HNQQ…SDWP, and DKNP…SKGK. 2 positions are modified to phosphoserine: S660 and S664. Composition is skewed to polar residues over residues 695-713 and 755-764; these read QQQN…NAKQ and DKNPSASKNV. A Phosphoserine modification is found at S936. T938 bears the Phosphothreonine mark. The disordered stretch occupies residues 962–1003; the sequence is QLIDYSRNKNVKNHKSGKSRSSLEKGQPSSKMTPSKNITKKM. The span at 970–979 shows a compositional bias: basic residues; sequence KNVKNHKSGK. The span at 988–998 shows a compositional bias: polar residues; that stretch reads QPSSKMTPSKN. Residues S1136, S1138, S1145, S1161, and S1177 each carry the phosphoserine modification. A Phosphothreonine modification is found at T1189. Phosphoserine occurs at positions 1204, 1234, 1253, 1295, and 1297. T1339 is subject to Phosphothreonine.

The protein belongs to the SYCP2 family. As to quaternary structure, component of the lateral elements of synaptonemal complexes. Heterodimer with SYCP3. Interacts with SMC1A and SMC3. Interacts with TEX11. In terms of processing, phosphorylated.

It is found in the nucleus. Its subcellular location is the chromosome. Its function is as follows. Major component of the axial/lateral elements of synaptonemal complexes (SCS) during meiotic prophase. Plays a role in the assembly of synaptonemal complexes. Required for normal meiotic chromosome synapsis during oocyte and spermatocyte development and for normal male and female fertility. Required for insertion of SYCP3 into synaptonemal complexes. May be involved in the organization of chromatin by temporarily binding to DNA scaffold attachment regions. Requires SYCP3, but not SYCP1, in order to be incorporated into the axial/lateral elements. The chain is Synaptonemal complex protein 2 (SYCP2) from Homo sapiens (Human).